The chain runs to 585 residues: Formate--tetrahydrofolate ligase (585 aa).

ATP is bound at residue Thr-65–Thr-72.

It belongs to the formate--tetrahydrofolate ligase family.

The catalysed reaction is (6S)-5,6,7,8-tetrahydrofolate + formate + ATP = (6R)-10-formyltetrahydrofolate + ADP + phosphate. It functions in the pathway one-carbon metabolism; tetrahydrofolate interconversion. This is Formate--tetrahydrofolate ligase from Shewanella baltica (strain OS195).